Here is a 440-residue protein sequence, read N- to C-terminus: Tubulin beta-3 chain (440 aa).

GTP contacts are provided by Gln-2, Glu-60, Ser-129, Gly-133, Thr-134, Gly-135, Asn-195, and Asn-217. Position 60 (Glu-60) interacts with Mg(2+). The disordered stretch occupies residues 411 to 440; that stretch reads SEYQQYQDATADEEGEYEDEEEEEPEHGYE. The span at 420–440 shows a compositional bias: acidic residues; that stretch reads TADEEGEYEDEEEEEPEHGYE.

This sequence belongs to the tubulin family. In terms of assembly, dimer of alpha and beta chains. A typical microtubule is a hollow water-filled tube with an outer diameter of 25 nm and an inner diameter of 15 nM. Alpha-beta heterodimers associate head-to-tail to form protofilaments running lengthwise along the microtubule wall with the beta-tubulin subunit facing the microtubule plus end conferring a structural polarity. Microtubules usually have 13 protofilaments but different protofilament numbers can be found in some organisms and specialized cells. It depends on Mg(2+) as a cofactor.

It localises to the cytoplasm. The protein resides in the cytoskeleton. In terms of biological role, tubulin is the major constituent of microtubules, a cylinder consisting of laterally associated linear protofilaments composed of alpha- and beta-tubulin heterodimers. Microtubules grow by the addition of GTP-tubulin dimers to the microtubule end, where a stabilizing cap forms. Below the cap, tubulin dimers are in GDP-bound state, owing to GTPase activity of alpha-tubulin. This Pisum sativum (Garden pea) protein is Tubulin beta-3 chain (TUBB3).